We begin with the raw amino-acid sequence, 542 residues long: CTP synthase (542 aa).

The segment at 1–265 (MTRYIFVTGG…DDIVVERFGL (265 aa)) is amidoligase domain. Ser13 contacts CTP. Ser13 is a binding site for UTP. ATP contacts are provided by residues 14-19 (SLGKGI) and Asp71. 2 residues coordinate Mg(2+): Asp71 and Glu139. Residues 146–148 (DIE), 186–191 (KTKPTQ), and Lys222 contribute to the CTP site. Residues 186–191 (KTKPTQ) and Lys222 each bind UTP. Residues 290-541 (TIAMVGKYME…VNAALKYSGK (252 aa)) form the Glutamine amidotransferase type-1 domain. Gly351 lines the L-glutamine pocket. Cys378 acts as the Nucleophile; for glutamine hydrolysis in catalysis. Residues 379-382 (LGMQ), Glu402, and Arg469 each bind L-glutamine. Residues His514 and Glu516 contribute to the active site.

The protein belongs to the CTP synthase family. Homotetramer.

The enzyme catalyses UTP + L-glutamine + ATP + H2O = CTP + L-glutamate + ADP + phosphate + 2 H(+). It carries out the reaction L-glutamine + H2O = L-glutamate + NH4(+). It catalyses the reaction UTP + NH4(+) + ATP = CTP + ADP + phosphate + 2 H(+). It participates in pyrimidine metabolism; CTP biosynthesis via de novo pathway; CTP from UDP: step 2/2. With respect to regulation, allosterically activated by GTP, when glutamine is the substrate; GTP has no effect on the reaction when ammonia is the substrate. The allosteric effector GTP functions by stabilizing the protein conformation that binds the tetrahedral intermediate(s) formed during glutamine hydrolysis. Inhibited by the product CTP, via allosteric rather than competitive inhibition. Functionally, catalyzes the ATP-dependent amination of UTP to CTP with either L-glutamine or ammonia as the source of nitrogen. Regulates intracellular CTP levels through interactions with the four ribonucleotide triphosphates. The polypeptide is CTP synthase (Pseudomonas aeruginosa (strain LESB58)).